The primary structure comprises 542 residues: Zinc finger CCHC domain-containing protein 7 (542 aa).

A disordered region spans residues 110 to 144 (QAQEKTQSPATPRSNKVANKCKRSNKKPEPEESPS). Positions 112 to 126 (QEKTQSPATPRSNKV) are enriched in polar residues. Residues lysine 129 and lysine 136 each participate in a glycyl lysine isopeptide (Lys-Gly) (interchain with G-Cter in SUMO2) cross-link. Serine 142 bears the Phosphoserine mark. Residues lysine 236 and lysine 251 each participate in a glycyl lysine isopeptide (Lys-Gly) (interchain with G-Cter in SUMO2) cross-link. 3 consecutive CCHC-type zinc fingers follow at residues 238 to 255 (VTCR…NCPL), 260 to 277 (RPCC…GCPA), and 301 to 318 (KRCD…ACPE). Lysine 336 is covalently cross-linked (Glycyl lysine isopeptide (Lys-Gly) (interchain with G-Cter in SUMO2)). The CCHC-type 4 zinc finger occupies 345–362 (VYCYNCAQKGHYGHECTE). A disordered region spans residues 396–542 (LKDIKKNGDF…RKKKPKSSGF (147 aa)). A Glycyl lysine isopeptide (Lys-Gly) (interchain with G-Cter in SUMO2) cross-link involves residue lysine 410. Positions 412–421 (PHGEETDRYH) are enriched in basic and acidic residues. Positions 422–435 (HDRRKSRFSGKRSR) are enriched in basic residues. Lysine 432 is covalently cross-linked (Glycyl lysine isopeptide (Lys-Gly) (interchain with G-Cter in SUMO2)). Residues 436 to 456 (WPRESKETQKEKTRGREGEKH) show a composition bias toward basic and acidic residues. Residue lysine 474 forms a Glycyl lysine isopeptide (Lys-Gly) (interchain with G-Cter in SUMO2) linkage. Positions 474–489 (KPNSSSSSNSQKPSKS) are enriched in low complexity. Residues serine 478 and serine 480 each carry the phosphoserine modification. Residues lysine 485 and lysine 488 each participate in a glycyl lysine isopeptide (Lys-Gly) (interchain with G-Cter in SUMO2) cross-link. Composition is skewed to basic and acidic residues over residues 499 to 510 (LREEKLRRESMR) and 518 to 528 (FVEDGSHDDLF). Lysine 531 is covalently cross-linked (Glycyl lysine isopeptide (Lys-Gly) (interchain with G-Cter in SUMO2)). Residues 531–542 (KQRKKKPKSSGF) are compositionally biased toward basic residues.

In terms of assembly, component of a nucleolar TRAMP-like complex, an ATP-dependent exosome regulatory complex consisting of a helicase (MTREX), an oligadenylate polymerase (TENT4B or TENT4A), and a substrate specific RNA-binding factor (ZCCHC7 or ZCCHC8). Several TRAMP-like complexes exist with specific compositions and are associated with nuclear, or nucleolar RNA exosomes.

The protein resides in the nucleus. The protein localises to the nucleolus. The polypeptide is Zinc finger CCHC domain-containing protein 7 (Zcchc7) (Rattus norvegicus (Rat)).